The following is a 412-amino-acid chain: Argininosuccinate synthase (412 aa).

10–18 contacts ATP; that stretch reads AYSGGLDTS. Residue Tyr-89 coordinates L-citrulline. Gly-119 contributes to the ATP binding site. L-aspartate is bound by residues Thr-121, Asn-125, and Asp-126. Asn-125 provides a ligand contact to L-citrulline. Residues Arg-129, Ser-177, Glu-261, and Tyr-273 each coordinate L-citrulline.

This sequence belongs to the argininosuccinate synthase family. Type 1 subfamily. As to quaternary structure, homotetramer.

Its subcellular location is the cytoplasm. It catalyses the reaction L-citrulline + L-aspartate + ATP = 2-(N(omega)-L-arginino)succinate + AMP + diphosphate + H(+). It functions in the pathway amino-acid biosynthesis; L-arginine biosynthesis; L-arginine from L-ornithine and carbamoyl phosphate: step 2/3. In Bifidobacterium longum subsp. infantis (strain ATCC 15697 / DSM 20088 / JCM 1222 / NCTC 11817 / S12), this protein is Argininosuccinate synthase.